Here is a 966-residue protein sequence, read N- to C-terminus: Mitogen-activated protein kinase kinase kinase 13 (966 aa).

Disordered regions lie at residues 1–22 (MANF…SESK), 30–49 (ELTA…QQEK), and 90–114 (HDES…SGTE). Residues 95 to 113 (TAVSQGNSNTVDGESTSGT) are compositionally biased toward polar residues. One can recognise a Protein kinase domain in the interval 168–409 (ISELQWLGSG…FRQTLMHLDI (242 aa)). ATP-binding positions include 174–182 (LGSGAQGAV) and Lys195. Asp279 acts as the Proton acceptor in catalysis. Leucine-zipper stretches follow at residues 433 to 454 (VKKH…DEEL) and 486 to 507 (LSAI…EQAV). Disordered stretches follow at residues 534–599 (KRKG…RGSH), 611–655 (AQEN…HHPR), 744–834 (DIPS…RRQR), and 846–908 (STFS…GLSD). The span at 567-581 (SPLSGSPKMSTSSSK) shows a compositional bias: low complexity. A compositionally biased stretch (basic residues) spans 582 to 594 (SRYRSKPRHRRGN). 2 stretches are compositionally biased toward polar residues: residues 611 to 629 (AQEN…SQYP) and 785 to 795 (RSESSLGTSHL). The span at 814-827 (DSSEEEEGEVDSEV) shows a compositional bias: acidic residues. Positions 815 to 828 (SSEEEEGEVDSEVE) are acidic. The segment covering 846-855 (STFSSENFSV) has biased composition (polar residues). A compositionally biased stretch (basic and acidic residues) spans 873–887 (LADKLEDRLAEKLDD).

This sequence belongs to the protein kinase superfamily. STE Ser/Thr protein kinase family. MAP kinase kinase kinase subfamily. Homodimer; forms dimers through the leucine-zipper motif. Interacts with the C-terminus of MAPK8IP1 through the kinase catalytic domain. Binds PRDX3. Associates with the IKK complex through the kinase domain. The cofactor is Mg(2+). In terms of processing, autophosphorylated on serine and threonine residues. In terms of tissue distribution, expressed in the adult brain, liver, placenta and pancreas, with expression strongest in the pancreas.

It is found in the cytoplasm. Its subcellular location is the membrane. It carries out the reaction L-seryl-[protein] + ATP = O-phospho-L-seryl-[protein] + ADP + H(+). It catalyses the reaction L-threonyl-[protein] + ATP = O-phospho-L-threonyl-[protein] + ADP + H(+). With respect to regulation, activated by autophosphorylation and homodimerization. Functionally, activates the JUN N-terminal pathway through activation of the MAP kinase kinase MAP2K7. Acts synergistically with PRDX3 to regulate the activation of NF-kappa-B in the cytosol. This activation is kinase-dependent and involves activating the IKK complex, the IKBKB-containing complex that phosphorylates inhibitors of NF-kappa-B. In Homo sapiens (Human), this protein is Mitogen-activated protein kinase kinase kinase 13.